The following is a 345-amino-acid chain: Uroporphyrinogen decarboxylase (345 aa).

Substrate contacts are provided by residues 27–31 (RQAGR), Phe46, Asp76, Tyr152, Ser207, and His321.

It belongs to the uroporphyrinogen decarboxylase family. As to quaternary structure, homodimer.

Its subcellular location is the cytoplasm. The enzyme catalyses uroporphyrinogen III + 4 H(+) = coproporphyrinogen III + 4 CO2. It functions in the pathway porphyrin-containing compound metabolism; protoporphyrin-IX biosynthesis; coproporphyrinogen-III from 5-aminolevulinate: step 4/4. Catalyzes the decarboxylation of four acetate groups of uroporphyrinogen-III to yield coproporphyrinogen-III. This is Uroporphyrinogen decarboxylase from Staphylococcus aureus (strain MRSA252).